We begin with the raw amino-acid sequence, 278 residues long: Transcription initiation factor TFIID subunit 9 (278 aa).

Residues 193 to 278 (TTTKTVGSSG…EEEEFEFVTN (86 aa)) are disordered. The span at 200-210 (SSGGSGGGGGQ) shows a compositional bias: gly residues. Positions 231-240 (AAAVGSIAGA) are enriched in low complexity. The span at 241–259 (SGSGAGSASGGGGGGGSSG) shows a compositional bias: gly residues. Over residues 269–278 (EEEEFEFVTN) the composition is skewed to acidic residues.

This sequence belongs to the TAF9 family. As to quaternary structure, belongs to the TFIID complex which is composed of TATA binding protein (Tbp) and a number of TBP-associated factors (TAFs). Taf9 and Taf6 exist as a heterotetramer. Interacts with e(y)2.

It is found in the nucleus. Its function is as follows. TFIID is a multimeric protein complex that plays a central role in mediating promoter responses to various activators and repressors. The chain is Transcription initiation factor TFIID subunit 9 from Drosophila melanogaster (Fruit fly).